Consider the following 246-residue polypeptide: Carboxy-S-adenosyl-L-methionine synthase (246 aa).

Residues tyrosine 39, 64–66 (GCS), 89–90 (DN), 117–118 (DI), asparagine 132, and arginine 199 each bind S-adenosyl-L-methionine.

It belongs to the class I-like SAM-binding methyltransferase superfamily. Cx-SAM synthase family. In terms of assembly, homodimer.

The enzyme catalyses prephenate + S-adenosyl-L-methionine = carboxy-S-adenosyl-L-methionine + 3-phenylpyruvate + H2O. Functionally, catalyzes the conversion of S-adenosyl-L-methionine (SAM) to carboxy-S-adenosyl-L-methionine (Cx-SAM). This Erwinia tasmaniensis (strain DSM 17950 / CFBP 7177 / CIP 109463 / NCPPB 4357 / Et1/99) protein is Carboxy-S-adenosyl-L-methionine synthase.